The sequence spans 117 residues: Circadian clock oscillator protein KaiB (117 aa).

This sequence belongs to the KaiB family. As to quaternary structure, may undergo a major conformational rearrangment; in the free state forms homooligomers. When bound to KaiC switches to a monomeric thioredoxin-fold (KaiB(fs)). The active oscillator complex is probably KaiC(6):KaiB(6).

Functionally, component of the KaiBC clock protein complex, which constitutes the main circadian regulator in cyanobacteria; it may modify the ATPase activity of KaiC. In terms of biological role, may be a metamorphic protein which reversibly switches between an inactive tetrameric fold and a rare, thioredoxin-like monomeric fold (KaiB(fs)). KaiB(fs) binds phospho-KaiC, and perhaps clock output effectors. The chain is Circadian clock oscillator protein KaiB from Prochlorococcus marinus (strain SARG / CCMP1375 / SS120).